Here is a 214-residue protein sequence, read N- to C-terminus: Adenylate kinase (214 aa).

An ATP-binding site is contributed by 10–15 (GAGKGT). The NMP stretch occupies residues 30 to 59 (STGDMFRAAIKAGTELGKQAKALMDEGKLV). AMP contacts are provided by residues Thr31, Arg36, 57–59 (KLV), 85–88 (GFPR), and Gln92. The segment at 122–159 (GRRVHQASGRSYHIVYNPPKVEGKDDVTGEDLIIRADD) is LID. ATP contacts are provided by residues Arg123 and 132-133 (SY). Residues Arg156 and Arg167 each coordinate AMP. Gln200 is a binding site for ATP.

This sequence belongs to the adenylate kinase family. Monomer.

It localises to the cytoplasm. The catalysed reaction is AMP + ATP = 2 ADP. The protein operates within purine metabolism; AMP biosynthesis via salvage pathway; AMP from ADP: step 1/1. Functionally, catalyzes the reversible transfer of the terminal phosphate group between ATP and AMP. Plays an important role in cellular energy homeostasis and in adenine nucleotide metabolism. It may be linked to the biosynthesis of lipopolysaccharide surface molecules, which are important for the pathogenesis of H.influenzae. In Haemophilus influenzae (strain ATCC 51907 / DSM 11121 / KW20 / Rd), this protein is Adenylate kinase.